The primary structure comprises 215 residues: Protein Syd (215 aa).

This sequence belongs to the Syd family.

It localises to the cell inner membrane. In terms of biological role, interacts with the SecY protein in vivo. May bind preferentially to an uncomplexed state of SecY, thus functioning either as a chelating agent for excess SecY in the cell or as a regulatory factor that negatively controls the translocase function. This is Protein Syd from Shewanella piezotolerans (strain WP3 / JCM 13877).